Here is a 347-residue protein sequence, read N- to C-terminus: Purine-rich element-binding protein gamma (347 aa).

Disordered stretches follow at residues Met1–Ala34 and Gly133–Ser169. Residues Gly9–Gly24 are compositionally biased toward gly residues. A DNA-binding region spans residues Ala51–Arg293. The span at His134–Ser146 shows a compositional bias: basic and acidic residues. Residues Ser160, Ser163, and Ser339 each carry the phosphoserine modification.

Belongs to the PUR DNA-binding protein family. In terms of tissue distribution, isoform 1 is expressed in testis and glioblastoma. Isoform 2 is expressed in fetal lung.

Its subcellular location is the nucleus. The chain is Purine-rich element-binding protein gamma (PURG) from Homo sapiens (Human).